Here is a 167-residue protein sequence, read N- to C-terminus: SsrA-binding protein (167 aa).

Over residues 139–158 (QNHDKRDAAKDRDWQRDKQR) the composition is skewed to basic and acidic residues. Residues 139-167 (QNHDKRDAAKDRDWQRDKQRVMRRHNRDA) are disordered.

The protein belongs to the SmpB family.

It is found in the cytoplasm. Functionally, required for rescue of stalled ribosomes mediated by trans-translation. Binds to transfer-messenger RNA (tmRNA), required for stable association of tmRNA with ribosomes. tmRNA and SmpB together mimic tRNA shape, replacing the anticodon stem-loop with SmpB. tmRNA is encoded by the ssrA gene; the 2 termini fold to resemble tRNA(Ala) and it encodes a 'tag peptide', a short internal open reading frame. During trans-translation Ala-aminoacylated tmRNA acts like a tRNA, entering the A-site of stalled ribosomes, displacing the stalled mRNA. The ribosome then switches to translate the ORF on the tmRNA; the nascent peptide is terminated with the 'tag peptide' encoded by the tmRNA and targeted for degradation. The ribosome is freed to recommence translation, which seems to be the essential function of trans-translation. In Xanthomonas euvesicatoria pv. vesicatoria (strain 85-10) (Xanthomonas campestris pv. vesicatoria), this protein is SsrA-binding protein.